Here is a 321-residue protein sequence, read N- to C-terminus: MTKYALVGDVGGTNARLALCDIASGEISQAKTYSGLDYPSLEAVVRVYLDEHSVSVEDGCIAIACPITGDWVAMTNHTWAFSIAEMKKNLGFSHLEIINDFTAVSMAIPMLKKEHLIQFGGGEPVDGKPIAVYGAGTGLGVAHLVHVDKRWISLPGEGGHVDFAPNSEEEAMILEILRAEIGHVSAERVLSGPGLVNLYRAIVKSDNRLPENLRPKDITARALADSCIDCRRALSLFCVIMGRFGGDLALTLGTFGGVYIAGGIVPRFLEFFKASGFRGGFEDKGRFKDYVHSIPVYLIVHDNPGLLGSGAHLRQTLGHIL.

ATP is bound at residue 8 to 13 (GDVGGT).

Belongs to the bacterial glucokinase family.

The protein localises to the cytoplasm. The catalysed reaction is D-glucose + ATP = D-glucose 6-phosphate + ADP + H(+). This is Glucokinase from Salmonella arizonae (strain ATCC BAA-731 / CDC346-86 / RSK2980).